Here is a 459-residue protein sequence, read N- to C-terminus: Glutathione reductase (459 aa).

FAD contacts are provided by serine 14, glycine 15, glutamate 34, threonine 41, cysteine 42, lysine 50, and alanine 114. Glutathione is bound at residue serine 14. An intrachain disulfide couples cysteine 42 to cysteine 47. Isoleucine 177, glutamate 180, arginine 197, lysine 203, and glycine 262 together coordinate NADP(+). FAD is bound by residues aspartate 313 and threonine 321. Arginine 329 provides a ligand contact to glutathione. Alanine 351 is a binding site for NADP(+). Residue histidine 448 participates in FAD binding. The active-site Proton acceptor is histidine 448.

The protein belongs to the class-I pyridine nucleotide-disulfide oxidoreductase family. As to quaternary structure, homodimer. It depends on FAD as a cofactor.

It is found in the cytoplasm. The enzyme catalyses 2 glutathione + NADP(+) = glutathione disulfide + NADPH + H(+). Catalyzes the reduction of glutathione disulfide (GSSG) to reduced glutathione (GSH). Constitutes the major mechanism to maintain a high GSH:GSSG ratio in the cytosol. This Nostoc sp. (strain PCC 7120 / SAG 25.82 / UTEX 2576) protein is Glutathione reductase (gor).